Consider the following 270-residue polypeptide: MEEGVSIYLVSDSNVDTAENIASIAAAHFDTFIEKIKKYPYVGDKNQIEEIIMEAANDANSIIIHTMVVPELKDYLLKKAQKFGIKIVDVMGPVINAIEDSTGISPHTNLAKNNKEDYLKKIEVIEFAVKYDDGKDAMGILLADVVVIGVSRTSKTPLCMYLAHKYIKAANLPLVPEIEPPQELFEINPKKIFGLTIDPEVLVKIRKERLKSLGLDANAIYATEERVKKEIKYAEEVMKRLGCTVIDVTNKAVEETANVILNVLKGGEIS.

Residue 149–156 coordinates ADP; sequence GVSRTSKT.

Belongs to the pyruvate, phosphate/water dikinase regulatory protein family. PDRP subfamily.

It catalyses the reaction N(tele)-phospho-L-histidyl/L-threonyl-[pyruvate, phosphate dikinase] + ADP = N(tele)-phospho-L-histidyl/O-phospho-L-threonyl-[pyruvate, phosphate dikinase] + AMP + H(+). It carries out the reaction N(tele)-phospho-L-histidyl/O-phospho-L-threonyl-[pyruvate, phosphate dikinase] + phosphate + H(+) = N(tele)-phospho-L-histidyl/L-threonyl-[pyruvate, phosphate dikinase] + diphosphate. Functionally, bifunctional serine/threonine kinase and phosphorylase involved in the regulation of the pyruvate, phosphate dikinase (PPDK) by catalyzing its phosphorylation/dephosphorylation. The sequence is that of Putative pyruvate, phosphate dikinase regulatory protein from Thermoanaerobacter pseudethanolicus (strain ATCC 33223 / 39E) (Clostridium thermohydrosulfuricum).